Reading from the N-terminus, the 207-residue chain is Acyl-homoserine-lactone synthase (207 aa).

Belongs to the autoinducer synthase family.

It catalyses the reaction a fatty acyl-[ACP] + S-adenosyl-L-methionine = an N-acyl-L-homoserine lactone + S-methyl-5'-thioadenosine + holo-[ACP] + H(+). In terms of biological role, required for the synthesis of N-butanoyl-L-homoserine lactone (BHL), an autoinducer molecule which binds to AhyR. This is Acyl-homoserine-lactone synthase (ahyI) from Aeromonas hydrophila.